We begin with the raw amino-acid sequence, 373 residues long: Transaminase AMT5 (373 aa).

Pyridoxal 5'-phosphate is bound at residue R92. K196 carries the N6-(pyridoxal phosphate)lysine modification. E232 serves as a coordination point for pyridoxal 5'-phosphate.

Belongs to the class-IV pyridoxal-phosphate-dependent aminotransferase family. Pyridoxal 5'-phosphate is required as a cofactor.

The protein operates within mycotoxin biosynthesis. Transaminase; part of the gene clusters that mediate the biosynthesis of AM-toxins, host-selective toxins (HSTs) causing Alternaria blotch on apple, a worldwide distributed disease. AM-toxins are cyclic depsipeptides containing the 3 residues 2-hydroxy-isovaleric acid (2-HIV), dehydroalanine, L-alanine which are common for all 3 AM-toxins I to III. The fourth precursor is L-alpha-amino-methoxyphenyl-valeric acid (L-Amv) for AM-toxin I, L-alpha-amino-phenyl-valeric acid (L-Apv) for AM-toxin II, and L-alpha-amino-hydroxyphenyl-valeric acid (L-Ahv) for AM-toxin III. AM-toxins have two target sites for affecting susceptible apple cells; they cause invagination of the plasma membrane and electrolyte loss and chloroplast disorganization. The non-ribosomal peptide synthetase AMT1 contains 4 catalytic modules and is responsible for activation of each residue in AM-toxin. The aldo-keto reductase AMT2 catalyzes the conversion of 2-keto-isovaleric acid (2-KIV) to 2-hydroxy-isovaleric acid (2-HIV), one of the precursor residues incorporated by AMT1 during AM-toxin biosynthesis, by reduction of its ketone to an alcohol. The cytochrome P450 monooxygenase AMT3 and the thioesterase AMT4 are also important for AM-toxin production, but their exact function within the AM-toxin biosynthesis are not known yet. Up to 21 proteins (including AMT1 to AMT4) are predicted to be involved in AM-toxin biosynthesis since their expression is highly up-regulated in AM-toxin-producing cultures. This is Transaminase AMT5 from Alternaria alternata (Alternaria rot fungus).